A 310-amino-acid polypeptide reads, in one-letter code: Probable manganese-dependent inorganic pyrophosphatase (310 aa).

His9, Asp13, Asp15, Asp76, His98, and Asp150 together coordinate Mn(2+).

Belongs to the PPase class C family. In terms of assembly, homodimer. Requires Mn(2+) as cofactor.

It localises to the cytoplasm. It catalyses the reaction diphosphate + H2O = 2 phosphate + H(+). This Streptococcus mutans serotype c (strain ATCC 700610 / UA159) protein is Probable manganese-dependent inorganic pyrophosphatase (ppaC).